Consider the following 386-residue polypeptide: Succinyl-diaminopimelate desuccinylase (386 aa).

Zn(2+) is bound at residue histidine 75. The active site involves aspartate 77. Zn(2+) is bound at residue aspartate 108. Glutamate 138 serves as the catalytic Proton acceptor. Residues glutamate 139, glutamate 167, and histidine 356 each contribute to the Zn(2+) site.

The protein belongs to the peptidase M20A family. DapE subfamily. In terms of assembly, homodimer. It depends on Zn(2+) as a cofactor. Requires Co(2+) as cofactor.

It catalyses the reaction N-succinyl-(2S,6S)-2,6-diaminopimelate + H2O = (2S,6S)-2,6-diaminopimelate + succinate. The protein operates within amino-acid biosynthesis; L-lysine biosynthesis via DAP pathway; LL-2,6-diaminopimelate from (S)-tetrahydrodipicolinate (succinylase route): step 3/3. Its function is as follows. Catalyzes the hydrolysis of N-succinyl-L,L-diaminopimelic acid (SDAP), forming succinate and LL-2,6-diaminopimelate (DAP), an intermediate involved in the bacterial biosynthesis of lysine and meso-diaminopimelic acid, an essential component of bacterial cell walls. The protein is Succinyl-diaminopimelate desuccinylase of Caulobacter vibrioides (strain ATCC 19089 / CIP 103742 / CB 15) (Caulobacter crescentus).